Reading from the N-terminus, the 79-residue chain is Small ribosomal subunit protein bS18 (79 aa).

Part of the 30S ribosomal subunit. Forms a tight heterodimer with protein bS6. Both N-terminus methionine truncation and retention have been observed for this protein. In terms of processing, may be methylated up to 6 times, on undetermined residues.

Functionally, binds as a heterodimer with protein bS6 to the central domain of the 16S rRNA, where it helps stabilize the platform of the 30S subunit. In Rhodopseudomonas palustris (strain ATCC BAA-98 / CGA009), this protein is Small ribosomal subunit protein bS18.